Consider the following 245-residue polypeptide: 1-(5-phosphoribosyl)-5-[(5-phosphoribosylamino)methylideneamino] imidazole-4-carboxamide isomerase (245 aa).

Residue D7 is the Proton acceptor of the active site. D129 functions as the Proton donor in the catalytic mechanism.

Belongs to the HisA/HisF family.

The protein resides in the cytoplasm. It carries out the reaction 1-(5-phospho-beta-D-ribosyl)-5-[(5-phospho-beta-D-ribosylamino)methylideneamino]imidazole-4-carboxamide = 5-[(5-phospho-1-deoxy-D-ribulos-1-ylimino)methylamino]-1-(5-phospho-beta-D-ribosyl)imidazole-4-carboxamide. It participates in amino-acid biosynthesis; L-histidine biosynthesis; L-histidine from 5-phospho-alpha-D-ribose 1-diphosphate: step 4/9. This Salmonella enteritidis PT4 (strain P125109) protein is 1-(5-phosphoribosyl)-5-[(5-phosphoribosylamino)methylideneamino] imidazole-4-carboxamide isomerase.